The sequence spans 341 residues: S-adenosylmethionine:tRNA ribosyltransferase-isomerase (341 aa).

The protein belongs to the QueA family. As to quaternary structure, monomer.

It is found in the cytoplasm. The enzyme catalyses 7-aminomethyl-7-carbaguanosine(34) in tRNA + S-adenosyl-L-methionine = epoxyqueuosine(34) in tRNA + adenine + L-methionine + 2 H(+). Its pathway is tRNA modification; tRNA-queuosine biosynthesis. Transfers and isomerizes the ribose moiety from AdoMet to the 7-aminomethyl group of 7-deazaguanine (preQ1-tRNA) to give epoxyqueuosine (oQ-tRNA). The chain is S-adenosylmethionine:tRNA ribosyltransferase-isomerase from Chlorobium phaeobacteroides (strain DSM 266 / SMG 266 / 2430).